Consider the following 311-residue polypeptide: Methionyl-tRNA formyltransferase (311 aa).

The interval 33–52 is disordered; the sequence is RPDRPAGRGRHQRSSPVREL. 110–113 serves as a coordination point for (6S)-5,6,7,8-tetrahydrofolate; that stretch reads SLLP.

The protein belongs to the Fmt family.

The enzyme catalyses L-methionyl-tRNA(fMet) + (6R)-10-formyltetrahydrofolate = N-formyl-L-methionyl-tRNA(fMet) + (6S)-5,6,7,8-tetrahydrofolate + H(+). Attaches a formyl group to the free amino group of methionyl-tRNA(fMet). The formyl group appears to play a dual role in the initiator identity of N-formylmethionyl-tRNA by promoting its recognition by IF2 and preventing the misappropriation of this tRNA by the elongation apparatus. The polypeptide is Methionyl-tRNA formyltransferase (Parafrankia sp. (strain EAN1pec)).